Reading from the N-terminus, the 123-residue chain is Loki profilin-3 (123 aa).

This sequence belongs to the Asgard profilin family.

Its subcellular location is the cytoplasm. The protein resides in the cytoskeleton. Its function is as follows. Binds to actin and affects the structure of the cytoskeleton. At high concentrations inhibits spontaneous rabbit actin nucleation. This strongly suggests this archaea has a profilin-regulated actin system, and actin-type genes can be identified in this organism. The sequence is that of Loki profilin-3 from Lokiarchaeum sp. (strain GC14_75).